A 44-amino-acid polypeptide reads, in one-letter code: uncharacterized protein (44 aa).

This is an uncharacterized protein from His1 virus (isolate Australia/Victoria) (His1V).